Consider the following 25-residue polypeptide: Hemocyanin subunit 2 (25 aa).

It belongs to the tyrosinase family. Hemocyanin subfamily. As to expression, hemolymph.

Its subcellular location is the secreted. The protein localises to the extracellular space. Its function is as follows. Hemocyanins are copper-containing oxygen carriers occurring freely dissolved in the hemolymph of many mollusks and arthropods. The chain is Hemocyanin subunit 2 from Carcinus maenas (Common shore crab).